A 328-amino-acid chain; its full sequence is Ribosomal protein L11 methyltransferase (328 aa).

S-adenosyl-L-methionine is bound by residues Thr153, Gly174, Asp196, and Asn263.

This sequence belongs to the methyltransferase superfamily. PrmA family.

The protein localises to the cytoplasm. The catalysed reaction is L-lysyl-[protein] + 3 S-adenosyl-L-methionine = N(6),N(6),N(6)-trimethyl-L-lysyl-[protein] + 3 S-adenosyl-L-homocysteine + 3 H(+). Its function is as follows. Methylates ribosomal protein L11. This Chloroflexus aurantiacus (strain ATCC 29366 / DSM 635 / J-10-fl) protein is Ribosomal protein L11 methyltransferase.